A 501-amino-acid polypeptide reads, in one-letter code: Calcium-dependent protein kinase 4 (501 aa).

The region spanning 25-283 is the Protein kinase domain; sequence YLLGKKLGQG…AHEALCHPWI (259 aa). ATP contacts are provided by residues 31 to 39 and Lys-54; that span reads LGQGQFGTT. Residue Asp-149 is the Proton acceptor of the active site. Ser-189 is modified (phosphoserine). The segment at 289–319 is autoinhibitory domain; the sequence is APDKPLDPAVLSRLKQFSQMNKIKKMALRVI. EF-hand domains lie at 326-361, 362-397, 398-433, and 437-467; these read EEIGGLKELFKMIDTDNSGTITFEELKAGLKRVGSE, LMESEIKSLMDAADIDNSGTIDYGEFLAATLHINKM, EREENLVVAFSYFDKDGSGYITIDELQQACTEFGLC, and LDDMIKEIDLDNDGKIDFSEFTAMMKKGDGV. Residues Asp-339, Asp-341, Ser-343, Thr-345, Glu-350, Asp-375, Asp-377, Ser-379, Thr-381, Glu-386, Asp-411, Asp-413, Ser-415, Tyr-417, Glu-422, Asp-445, Asp-447, Asp-449, Lys-451, and Glu-456 each contribute to the Ca(2+) site.

The protein belongs to the protein kinase superfamily. Ser/Thr protein kinase family. CDPK subfamily. Interacts with Di19.

The protein localises to the cytoplasm. Its subcellular location is the nucleus. The catalysed reaction is L-seryl-[protein] + ATP = O-phospho-L-seryl-[protein] + ADP + H(+). It carries out the reaction L-threonyl-[protein] + ATP = O-phospho-L-threonyl-[protein] + ADP + H(+). With respect to regulation, activated by calcium. Autophosphorylation may play an important role in the regulation of the kinase activity. In terms of biological role, may play a role in signal transduction pathways that involve calcium as a second messenger. Functions as a regulator of the calcium-mediated abscisic acid (ABA) signaling pathway. Phosphorylates ABA-responsive transcription factors ABF1 and ABF4 in vitro. Phosphorylates the nuclear zinc finger Di19 in vitro. The sequence is that of Calcium-dependent protein kinase 4 (CPK4) from Arabidopsis thaliana (Mouse-ear cress).